Consider the following 149-residue polypeptide: Calmodulin (149 aa).

A2 carries the N-acetylalanine modification. 4 EF-hand domains span residues 8–43, 44–79, 81–116, and 117–149; these read EQISEFKEAFSLFDKDGDGTITTKELGTVMRSLGQN, PTEAELQDMINEVDADGNGTIDFPEFLTMMARKMRD, DSEEEIKEAFKVFDKDGNGYISAAELRHVMTNLGEK, and LTDNEVDEMIREADIDGDGQINYEEFVKMMLSK. Ca(2+) is bound by residues D21, D23, D25, T27, E32, D57, D59, N61, T63, E68, D94, D96, N98, Y100, E105, D130, D132, D134, Q136, and E141.

This sequence belongs to the calmodulin family. Trimethylation of Lys-116 observed in other calmodulins is absent here.

Calmodulin mediates the control of a large number of enzymes, ion channels and other proteins by Ca(2+). Among the enzymes to be stimulated by the calmodulin-Ca(2+) complex are a number of protein kinases and phosphatases. The protein is Calmodulin (CMD1) of Pleurotus cornucopiae (Cornucopia mushroom).